Reading from the N-terminus, the 361-residue chain is Isocitrate dehydrogenase [NAD] subunit 1, mitochondrial (361 aa).

The N-terminal 12 residues, 1-12, are a transit peptide targeting the mitochondrion; the sequence is MLRQGIAAQKKS. Substrate-binding residues include Arg110, Arg141, and Asp229. Mg(2+) is bound at residue Asp229.

Belongs to the isocitrate and isopropylmalate dehydrogenases family. In terms of assembly, octamer of two non-identical subunits IDH1 and IDH2. Mg(2+) is required as a cofactor. Requires Mn(2+) as cofactor.

The protein resides in the mitochondrion. It catalyses the reaction D-threo-isocitrate + NAD(+) = 2-oxoglutarate + CO2 + NADH. Functionally, performs an essential role in the oxidative function of the citric acid cycle. In Kluyveromyces lactis (strain ATCC 8585 / CBS 2359 / DSM 70799 / NBRC 1267 / NRRL Y-1140 / WM37) (Yeast), this protein is Isocitrate dehydrogenase [NAD] subunit 1, mitochondrial (IDH1).